Reading from the N-terminus, the 232-residue chain is Large ribosomal subunit protein uL1 (232 aa).

Belongs to the universal ribosomal protein uL1 family. Part of the 50S ribosomal subunit.

In terms of biological role, binds directly to 23S rRNA. The L1 stalk is quite mobile in the ribosome, and is involved in E site tRNA release. Its function is as follows. Protein L1 is also a translational repressor protein, it controls the translation of the L11 operon by binding to its mRNA. This is Large ribosomal subunit protein uL1 from Xanthomonas campestris pv. campestris (strain B100).